The sequence spans 236 residues: Ribonuclease 3 (236 aa).

Positions 6–140 constitute an RNase III domain; that stretch reads FLDFLKQNRI…FIGAVAQDQG (135 aa). Mg(2+) is bound at residue Glu46. The active site involves Asp50. Residues Asp126 and Glu129 each coordinate Mg(2+). Glu129 is a catalytic residue. One can recognise a DRBM domain in the interval 166–231; sequence DYKTIFQEQA…AKNAILKLDD (66 aa).

This sequence belongs to the ribonuclease III family. Homodimer. Mg(2+) is required as a cofactor.

It is found in the cytoplasm. It carries out the reaction Endonucleolytic cleavage to 5'-phosphomonoester.. Digests double-stranded RNA. Involved in the processing of primary rRNA transcript to yield the immediate precursors to the large and small rRNAs (23S and 16S). Processes some mRNAs, and tRNAs when they are encoded in the rRNA operon. Processes pre-crRNA and tracrRNA of type II CRISPR loci if present in the organism. This chain is Ribonuclease 3, found in Ureaplasma parvum serovar 3 (strain ATCC 700970).